A 276-amino-acid polypeptide reads, in one-letter code: Aspartate dehydrogenase domain-containing protein (276 aa).

Belongs to the L-aspartate dehydrogenase family.

The polypeptide is Aspartate dehydrogenase domain-containing protein (aspdh) (Danio rerio (Zebrafish)).